The sequence spans 398 residues: MAKEKYDRSKPHVNIGTIGHVDHGKTTLTAAITTVLARRLPSSVNQPKDYASIDAAPEERERGITINTAHVEYETEKRHYAHIDAPGHADYVKNMITGAAQMDGAILVVASTDGPMPQTREHILLSRQVGVKHLIVFMNKVDLVDDEELLELVEMEIRDLLSEYDFPGDDLPVIQGSALKALEGDSKYEDIVMELMNTVDEYIPEPERDTDKPLLLPVEDVFSITGRGTVASGRIDRGTVRVNDEIEIVGLQEEKSKAVVTGVEMFRKQLDEGLAGDNVGVLLRGVQRDEIERGQVISKPGSINPHTKFKGEVYILTKEEGGRHTPFFDNYRPQFYFRTTDVTGSIKLPEGTEMVMPGDNVTIDVELIHPIAVEQGTTFSIREGGRTVGSGMVTEIEA.

A tr-type G domain is found at 10–207 (KPHVNIGTIG…TVDEYIPEPE (198 aa)). Residues 19–26 (GHVDHGKT) are G1. 19–26 (GHVDHGKT) is a GTP binding site. T26 provides a ligand contact to Mg(2+). The interval 63-67 (GITIN) is G2. Positions 84-87 (DAPG) are G3. GTP is bound by residues 84–88 (DAPGH) and 139–142 (NKVD). The segment at 139-142 (NKVD) is G4. Residues 177–179 (SAL) are G5.

This sequence belongs to the TRAFAC class translation factor GTPase superfamily. Classic translation factor GTPase family. EF-Tu/EF-1A subfamily. As to quaternary structure, monomer.

It is found in the cytoplasm. The catalysed reaction is GTP + H2O = GDP + phosphate + H(+). GTP hydrolase that promotes the GTP-dependent binding of aminoacyl-tRNA to the A-site of ribosomes during protein biosynthesis. In Streptococcus suis (strain 98HAH33), this protein is Elongation factor Tu.